We begin with the raw amino-acid sequence, 339 residues long: Nicotinate-nucleotide--dimethylbenzimidazole phosphoribosyltransferase (339 aa).

Glu306 serves as the catalytic Proton acceptor.

This sequence belongs to the CobT family.

It carries out the reaction 5,6-dimethylbenzimidazole + nicotinate beta-D-ribonucleotide = alpha-ribazole 5'-phosphate + nicotinate + H(+). It participates in nucleoside biosynthesis; alpha-ribazole biosynthesis; alpha-ribazole from 5,6-dimethylbenzimidazole: step 1/2. Catalyzes the synthesis of alpha-ribazole-5'-phosphate from nicotinate mononucleotide (NAMN) and 5,6-dimethylbenzimidazole (DMB). In Brucella melitensis biotype 2 (strain ATCC 23457), this protein is Nicotinate-nucleotide--dimethylbenzimidazole phosphoribosyltransferase.